Here is a 727-residue protein sequence, read N- to C-terminus: NADH-ubiquinone oxidoreductase 75 kDa subunit, mitochondrial (727 aa).

The N-terminal 23 residues, 1–23 (MLRIPVRKALVGLSKSPKGCVRT), are a transit peptide targeting the mitochondrion. The region spanning 30-108 (NLIEVFVDGQ…GWNILTNSEK (79 aa)) is the 2Fe-2S ferredoxin-type domain. 3 residues coordinate [2Fe-2S] cluster: Cys64, Cys75, and Cys78. Lys84 carries the N6-acetyllysine modification. Cys92 is a binding site for [2Fe-2S] cluster. The region spanning 108–147 (KSKKAREGVMELLLANHPLDCPICDQGGECDLQDQSMMFG) is the 4Fe-4S His(Cys)3-ligated-type domain. [4Fe-4S] cluster contacts are provided by His124, Cys128, Cys131, Cys137, Cys176, Cys179, Cys182, and Cys226. Residues 245 to 301 (TRKTESIDVMDAVGSNIVVSTRTGEVMRILPRMHEDINEEWISDKTRFAYDGLKRQR) form the 4Fe-4S Mo/W bis-MGD-type domain. An N6-acetyllysine mark is found at Lys467, Lys499, and Lys709.

The protein belongs to the complex I 75 kDa subunit family. In terms of assembly, core subunit of respiratory chain NADH dehydrogenase (Complex I) which is composed of 45 different subunits. This is the largest subunit of complex I and it is a component of the iron-sulfur (IP) fragment of the enzyme. Complex I associates with ubiquinol-cytochrome reductase complex (Complex III) to form supercomplexes. Interacts with MDM2 and AKAP1. The cofactor is [2Fe-2S] cluster. [4Fe-4S] cluster is required as a cofactor.

The protein resides in the mitochondrion inner membrane. The enzyme catalyses a ubiquinone + NADH + 5 H(+)(in) = a ubiquinol + NAD(+) + 4 H(+)(out). Its function is as follows. Core subunit of the mitochondrial membrane respiratory chain NADH dehydrogenase (Complex I) which catalyzes electron transfer from NADH through the respiratory chain, using ubiquinone as an electron acceptor. Essential for catalysing the entry and efficient transfer of electrons within complex I. Plays a key role in the assembly and stability of complex I and participates in the association of complex I with ubiquinol-cytochrome reductase complex (Complex III) to form supercomplexes. The protein is NADH-ubiquinone oxidoreductase 75 kDa subunit, mitochondrial (NDUFS1) of Pongo abelii (Sumatran orangutan).